Consider the following 87-residue polypeptide: Protein anon-73B1 (87 aa).

The helical transmembrane segment at 25–47 threads the bilayer; it reads LLIRYGLYVGALFQFVCISAAVL. A disordered region spans residues 51–87; it reads NPDGQSNPESGEVTEREGEPVRTRLHKIRKLEKKKRR. Positions 63-72 are enriched in basic and acidic residues; it reads VTEREGEPVR. Over residues 73–87 the composition is skewed to basic residues; that stretch reads TRLHKIRKLEKKKRR.

This sequence belongs to the UPF0239 family.

The protein localises to the membrane. The sequence is that of Protein anon-73B1 (anon-73B1) from Drosophila melanogaster (Fruit fly).